A 341-amino-acid polypeptide reads, in one-letter code: 5-formaminoimidazole-4-carboxamide-1-(beta)-D-ribofuranosyl 5'-monophosphate synthetase (341 aa).

Positions 10 and 77 each coordinate 5-amino-1-(5-phospho-beta-D-ribosyl)imidazole-4-carboxamide. Positions 106-317 (DREMKEKLMR…YYNLLFNETM (212 aa)) constitute an ATP-grasp domain. ATP is bound by residues 132-188 (EKLS…VLAY) and Glu210. Asn238 is a 5-amino-1-(5-phospho-beta-D-ribosyl)imidazole-4-carboxamide binding site. Mg(2+)-binding residues include Glu277 and Glu290.

This sequence belongs to the phosphohexose mutase family. Requires Mg(2+) as cofactor. Mn(2+) serves as cofactor.

It catalyses the reaction 5-amino-1-(5-phospho-beta-D-ribosyl)imidazole-4-carboxamide + formate + ATP = 5-formamido-1-(5-phospho-D-ribosyl)imidazole-4-carboxamide + ADP + phosphate. It participates in purine metabolism; IMP biosynthesis via de novo pathway; 5-formamido-1-(5-phospho-D-ribosyl)imidazole-4-carboxamide from 5-amino-1-(5-phospho-D-ribosyl)imidazole-4-carboxamide (formate route): step 1/1. Its function is as follows. Catalyzes the ATP- and formate-dependent formylation of 5-aminoimidazole-4-carboxamide-1-beta-d-ribofuranosyl 5'-monophosphate (AICAR) to 5-formaminoimidazole-4-carboxamide-1-beta-d-ribofuranosyl 5'-monophosphate (FAICAR) in the absence of folates. The sequence is that of 5-formaminoimidazole-4-carboxamide-1-(beta)-D-ribofuranosyl 5'-monophosphate synthetase from Nitrosopumilus maritimus (strain SCM1).